The sequence spans 97 residues: Osteocalcin (97 aa).

A signal peptide spans 1 to 18 (MKTLAILVLCSLAAICLT). A propeptide spanning residues 19–52 (SSASAGAQPAGDSPVQGGLFMEKDQASAVVRQTR) is cleaved from the precursor. In terms of domain architecture, Gla spans 53 to 93 (AAKELTLAQTESLREVCETNMACDEMADAQGIVAAYQAFYG). Ca(2+)-binding residues include glutamate 63, glutamate 67, glutamate 70, and aspartate 76. 3 positions are modified to 4-carboxyglutamate: glutamate 63, glutamate 67, and glutamate 70. The cysteines at positions 69 and 75 are disulfide-linked. 4-carboxyglutamate is present on glutamate 77.

This sequence belongs to the osteocalcin/matrix Gla protein family. Post-translationally, gamma-carboxyglutamate residues are formed by vitamin K dependent carboxylation by GGCX. These residues are essential for the binding of calcium. In the branchial arches, BGP is found outside the chondrocyte-containing zone. It is found in some cells in the basal zone of the branchial filaments, near the branchial arches, and within the extracellular matrix in the medial zone. In the vertebra, BGP is found in the mineralized bone matrix.

It localises to the secreted. The carboxylated form is one of the main organic components of the bone matrix, which constitutes 1-2% of the total bone protein. The carboxylated form binds strongly to apatite and calcium. This is Osteocalcin (bglap) from Argyrosomus regius (Meagre).